The primary structure comprises 418 residues: Tryptophan synthase beta chain 1 (418 aa).

Lysine 99 is modified (N6-(pyridoxal phosphate)lysine).

The protein belongs to the TrpB family. Tetramer of two alpha and two beta chains. The cofactor is pyridoxal 5'-phosphate.

It carries out the reaction (1S,2R)-1-C-(indol-3-yl)glycerol 3-phosphate + L-serine = D-glyceraldehyde 3-phosphate + L-tryptophan + H2O. The protein operates within amino-acid biosynthesis; L-tryptophan biosynthesis; L-tryptophan from chorismate: step 5/5. The beta subunit is responsible for the synthesis of L-tryptophan from indole and L-serine. The protein is Tryptophan synthase beta chain 1 (trpB1) of Corynebacterium efficiens (strain DSM 44549 / YS-314 / AJ 12310 / JCM 11189 / NBRC 100395).